The following is a 317-amino-acid chain: MSKTLKESVIAVIYGGRSAEREVSLQSGPLVAEGLRAKGYQVVELDLYGSNAALDPIVQLQSIEFDLAFIALHGGEGEDGRVQALLEMFGKPYTGSSPLACGLAMDKVLTKRFWNGIGIPTPAYLSFVDHANADLIEEQMSYPVIVKPSREGSTIGINKAMNRAELDDALIKALEYDSDILVEEFIDGPEFTVTVIDDVAYPPIGLKPAPDHKLYDYEAKYIADDTEYLLPCGLDEDDENELQMLALDAYRSLGCFGWGRVDVMRDQAGVFWVLEVNTAPGMTSHSLVPMAAKYVGIDYASLVEKIAQNAWDKVGRN.

The ATP-grasp domain occupies Lys-111 to Gln-308. Residue Glu-137–Thr-192 coordinates ATP. Mg(2+) is bound by residues Asp-262, Glu-275, and Asn-277.

Belongs to the D-alanine--D-alanine ligase family. Requires Mg(2+) as cofactor. It depends on Mn(2+) as a cofactor.

Its subcellular location is the cytoplasm. It catalyses the reaction 2 D-alanine + ATP = D-alanyl-D-alanine + ADP + phosphate + H(+). Its pathway is cell wall biogenesis; peptidoglycan biosynthesis. Functionally, cell wall formation. This is D-alanine--D-alanine ligase from Marinomonas sp. (strain MWYL1).